Reading from the N-terminus, the 328-residue chain is Lipoyl synthase (328 aa).

Residues Cys57, Cys62, Cys68, Cys83, Cys87, Cys90, and Ser298 each coordinate [4Fe-4S] cluster. Residues 69–287 enclose the Radical SAM core domain; it reads WSRGTATFML…REEGLSLGFL (219 aa).

It belongs to the radical SAM superfamily. Lipoyl synthase family. It depends on [4Fe-4S] cluster as a cofactor.

It localises to the cytoplasm. The catalysed reaction is [[Fe-S] cluster scaffold protein carrying a second [4Fe-4S](2+) cluster] + N(6)-octanoyl-L-lysyl-[protein] + 2 oxidized [2Fe-2S]-[ferredoxin] + 2 S-adenosyl-L-methionine + 4 H(+) = [[Fe-S] cluster scaffold protein] + N(6)-[(R)-dihydrolipoyl]-L-lysyl-[protein] + 4 Fe(3+) + 2 hydrogen sulfide + 2 5'-deoxyadenosine + 2 L-methionine + 2 reduced [2Fe-2S]-[ferredoxin]. It functions in the pathway protein modification; protein lipoylation via endogenous pathway; protein N(6)-(lipoyl)lysine from octanoyl-[acyl-carrier-protein]: step 2/2. Functionally, catalyzes the radical-mediated insertion of two sulfur atoms into the C-6 and C-8 positions of the octanoyl moiety bound to the lipoyl domains of lipoate-dependent enzymes, thereby converting the octanoylated domains into lipoylated derivatives. The polypeptide is Lipoyl synthase (Deinococcus geothermalis (strain DSM 11300 / CIP 105573 / AG-3a)).